Consider the following 175-residue polypeptide: Tumor necrosis factor receptor superfamily member 13C (175 aa).

The Extracellular segment spans residues 1–71; the sequence is MGARRLRVRS…EGSALRPDVA (71 aa). The TNFR-Cys; truncated repeat unit spans residues 21–38; sequence QCNQTECFDPLVRNCVSC. Intrachain disulfides connect Cys-22-Cys-35 and Cys-27-Cys-38. N-linked (GlcNAc...) asparagine glycosylation occurs at Asn-23. Residues 29-34 are essential for TNFSF13B/TALL1/BAFF/BLyS binding; that stretch reads DPLVRN. A helical; Signal-anchor for type III membrane protein transmembrane segment spans residues 72-92; that stretch reads LLVGAPALLGLILALTLVGLV. The Cytoplasmic portion of the chain corresponds to 93–175; the sequence is SLVSWRWRQQ…VTTKTAGPEQ (83 aa). The segment at 124–175 is disordered; sequence VPSSETPHASAPTWPPLKEDADSALPRHSVPVPATELGSTELVTTKTAGPEQ. Polar residues predominate over residues 160 to 175; sequence LGSTELVTTKTAGPEQ.

In terms of tissue distribution, highly expressed in spleen and testis; detected at lower levels in lung and thymus.

It is found in the membrane. B-cell receptor specific for TNFSF13B/TALL1/BAFF/BLyS. Promotes the survival of mature B-cells and the B-cell response. The chain is Tumor necrosis factor receptor superfamily member 13C (Tnfrsf13c) from Mus musculus (Mouse).